The following is a 549-amino-acid chain: Undecaprenyl phosphate-alpha-4-amino-4-deoxy-L-arabinose arabinosyl transferase (549 aa).

12 helical membrane passes run 9–29, 80–100, 112–132, 136–156, 176–196, 204–224, 256–276, 288–308, 312–332, 346–366, 376–396, and 402–422; these read LLLI…GLWI, LFGV…LAYL, SLAC…SGYA, PQFT…LDAG, FLTK…PYML, LLGY…PWAL, PWWF…GLLP, QAPV…FSLS, LPTY…HALV, NGLL…YLQL, FELF…LAQW, and AWAA…AAMP.

It belongs to the glycosyltransferase 83 family.

Its subcellular location is the cell inner membrane. The catalysed reaction is 4-amino-4-deoxy-alpha-L-arabinopyranosyl di-trans,octa-cis-undecaprenyl phosphate + lipid IVA = lipid IIA + di-trans,octa-cis-undecaprenyl phosphate.. It functions in the pathway lipopolysaccharide metabolism; 4-amino-4-deoxy-beta-L-arabinose-lipid A biosynthesis. Its function is as follows. Catalyzes the transfer of the L-Ara4N moiety of the glycolipid undecaprenyl phosphate-alpha-L-Ara4N to lipid A. The modified arabinose is attached to lipid A and is required for resistance to polymyxin and cationic antimicrobial peptides. This Pseudomonas aeruginosa (strain ATCC 15692 / DSM 22644 / CIP 104116 / JCM 14847 / LMG 12228 / 1C / PRS 101 / PAO1) protein is Undecaprenyl phosphate-alpha-4-amino-4-deoxy-L-arabinose arabinosyl transferase.